Here is a 327-residue protein sequence, read N- to C-terminus: Mitochondrial carnitine carrier (327 aa).

The segment covering 1 to 11 (MSSDTSLSESS) has biased composition (low complexity). A disordered region spans residues 1-29 (MSSDTSLSESSLLKEESGSLTKSRPPIKS). Helical transmembrane passes span 33 to 49 (RENI…GVCA), 107 to 123 (LGVT…YDVG), 141 to 162 (MGQM…TAPT), 196 to 212 (GSLA…ALYF), 244 to 260 (LAGG…VFPI), and 293 to 313 (FFPG…ATFL). 3 Solcar repeats span residues 33-126 (RENI…GKKL), 139-221 (LTMG…SKNY), and 237-321 (VNIL…THSL).

This sequence belongs to the mitochondrial carrier (TC 2.A.29) family.

It is found in the mitochondrion inner membrane. Its function is as follows. Transports carnitine, acetylcarnitine, propionylcarnitine and to a much lower extent medium- and long-chain acylcarnitines. This is Mitochondrial carnitine carrier (CRC1) from Saccharomyces cerevisiae (strain ATCC 204508 / S288c) (Baker's yeast).